Consider the following 654-residue polypeptide: MPTMPLLLAALAALAVLALAARPSPSCSPGPDPSGKCQRLVYTHSATCVDLHLRTCADAAYNHTSFPTPLEHRSWEAVESSPEYMLLGVIHFLLEGQCNPDLRLLGCSVLAPRCEGGHTQRPCRHVCEGLREACQPAFDAIDMAWPYFLDCAQYFAPEEEGCYDPLEELRGELDVEEALPSGLPPTFIRFAHHSYAQMVRVLKRTAARCSQVAKTYSIGRSFEGKDLVVIEFSSRPGQHELMEPEVKLIGNIHGNEVAGREVLIYLAQYLCSEYLLGNPRIQRLLNTTRIHLLPSMNPDGYEVAAAEGAGYNGWTSGRQNAQNLDLNRNFPDLTSEYYRLASTRGVRTDHIPISQYYWWGKVAPETKAIMKWIQTIPFVLSASLHGGDLVVSYPFDFSKNPHEKKMFSPTPDEKMFKLLARAYADVHPMMMDRSENRCGGNFLKRGSIINGADWYSFTGGMSDFNYLHTNCFEITVELGCVKFPPEEALYGLWQQNKEPLLNFLEMVHRGIKGMVTDKYGKPVKNARILVKGIRHDVTTAPDGDYWRLLPPGSHIVIAQAPGYSKVMKRVTIPLRMKKAGRVDFILHPLATGPKNFLPGPSRALPRFQDPQREPTQMDFEPPRARRQPASGSKPWWWAYFTSLSPYKPRWLLKY.

Positions 1-20 (MPTMPLLLAALAALAVLALA) are cleaved as a signal peptide. One can recognise an FZ domain in the interval 43 to 165 (THSATCVDLH…APEEEGCYDP (123 aa)). Disulfide bonds link Cys48–Cys114, Cys56–Cys107, Cys98–Cys134, Cys123–Cys162, and Cys127–Cys151. An N-linked (GlcNAc...) asparagine glycan is attached at Asn62. A Peptidase M14 domain is found at 191–507 (AHHSYAQMVR…EPLLNFLEMV (317 aa)). Residues His253 and Glu256 each contribute to the Zn(2+) site. Residue Asn286 is glycosylated (N-linked (GlcNAc...) asparagine). His385 contributes to the Zn(2+) binding site. Residue Glu477 is the Proton donor/acceptor of the active site. The interval 596–630 (FLPGPSRALPRFQDPQREPTQMDFEPPRARRQPAS) is disordered.

Belongs to the peptidase M14 family. Requires Zn(2+) as cofactor.

It localises to the secreted. Its subcellular location is the extracellular space. It is found in the extracellular matrix. With respect to regulation, inhibited by 2-mercaptomethyl-3-guanidinoethylthiopropanoic acid (MGTA) and guanidinoethylmercaptosuccinic acid (GEMSA). Inhibited by chelating agents such as EDTA and EGTA. Functionally, cleaves substrates with C-terminal arginine residues. Probably modulates the Wnt signaling pathway, by cleaving some undefined protein. May play a role in cleavage during prohormone processing. This chain is Carboxypeptidase Z (Cpz), found in Mus musculus (Mouse).